Consider the following 322-residue polypeptide: Large ribosomal subunit protein uL15m (322 aa).

Residues 1–57 constitute a mitochondrion transit peptide; sequence MKAERQTGLRNSFTTVIGRKLINTFVPSMMLTSVAGNDIFFRGLFKSPVLAFQSYRY. Residues 69 to 99 are disordered; sequence GSTKSFKRLGRGPSSGLGKTSGRGQKGQKAR. A compositionally biased stretch (gly residues) spans 81 to 93; the sequence is PSSGLGKTSGRGQ.

This sequence belongs to the universal ribosomal protein uL15 family. Component of the mitochondrial large ribosomal subunit (mt-LSU). Mature yeast 74S mitochondrial ribosomes consist of a small (37S) and a large (54S) subunit. The 37S small subunit contains a 15S ribosomal RNA (15S mt-rRNA) and 34 different proteins. The 54S large subunit contains a 21S rRNA (21S mt-rRNA) and 46 different proteins.

The protein localises to the mitochondrion. Component of the mitochondrial ribosome (mitoribosome), a dedicated translation machinery responsible for the synthesis of mitochondrial genome-encoded proteins, including at least some of the essential transmembrane subunits of the mitochondrial respiratory chain. The mitoribosomes are attached to the mitochondrial inner membrane and translation products are cotranslationally integrated into the membrane. This Saccharomyces cerevisiae (strain ATCC 204508 / S288c) (Baker's yeast) protein is Large ribosomal subunit protein uL15m (MRPL10).